The sequence spans 248 residues: Probable transcriptional regulatory protein Oter_1471 (248 aa).

This sequence belongs to the TACO1 family.

It is found in the cytoplasm. The protein is Probable transcriptional regulatory protein Oter_1471 of Opitutus terrae (strain DSM 11246 / JCM 15787 / PB90-1).